The primary structure comprises 228 residues: 2,3-bisphosphoglycerate-dependent phosphoglycerate mutase (228 aa).

Substrate is bound by residues 8–15, 21–22, R60, 87–90, K98, 114–115, and 180–181; these read RHGQSQWN, TG, ERHY, RR, and GN. H9 serves as the catalytic Tele-phosphohistidine intermediate. E87 serves as the catalytic Proton donor/acceptor.

It belongs to the phosphoglycerate mutase family. BPG-dependent PGAM subfamily. As to quaternary structure, homodimer.

It carries out the reaction (2R)-2-phosphoglycerate = (2R)-3-phosphoglycerate. It participates in carbohydrate degradation; glycolysis; pyruvate from D-glyceraldehyde 3-phosphate: step 3/5. Functionally, catalyzes the interconversion of 2-phosphoglycerate and 3-phosphoglycerate. The polypeptide is 2,3-bisphosphoglycerate-dependent phosphoglycerate mutase (Novosphingobium aromaticivorans (strain ATCC 700278 / DSM 12444 / CCUG 56034 / CIP 105152 / NBRC 16084 / F199)).